The primary structure comprises 295 residues: Glutamyl-Q tRNA(Asp) synthetase (295 aa).

Residues 6–10 (RFAPS) and glutamate 42 contribute to the L-glutamate site. The short motif at 9 to 19 (PSPTGAMHLGN) is the 'HIGH' region element. Residues cysteine 93, cysteine 95, tyrosine 118, and cysteine 122 each contribute to the Zn(2+) site. 2 residues coordinate L-glutamate: tyrosine 177 and arginine 195. Residues 233-237 (RLAKR) carry the 'KMSKS' region motif. Lysine 236 lines the ATP pocket.

The protein belongs to the class-I aminoacyl-tRNA synthetase family. GluQ subfamily. Zn(2+) is required as a cofactor.

Its function is as follows. Catalyzes the tRNA-independent activation of glutamate in presence of ATP and the subsequent transfer of glutamate onto a tRNA(Asp). Glutamate is transferred on the 2-amino-5-(4,5-dihydroxy-2-cyclopenten-1-yl) moiety of the queuosine in the wobble position of the QUC anticodon. This Deinococcus radiodurans (strain ATCC 13939 / DSM 20539 / JCM 16871 / CCUG 27074 / LMG 4051 / NBRC 15346 / NCIMB 9279 / VKM B-1422 / R1) protein is Glutamyl-Q tRNA(Asp) synthetase.